We begin with the raw amino-acid sequence, 279 residues long: Small ribosomal subunit protein uS2 (279 aa).

The protein belongs to the universal ribosomal protein uS2 family. As to quaternary structure, component of the small ribosomal subunit. Mature ribosomes consist of a small (40S) and a large (60S) subunit. The 40S subunit contains about 33 different proteins and 1 molecule of RNA (18S). The 60S subunit contains about 49 different proteins and 3 molecules of RNA (25S, 5.8S and 5S). Interacts with ribosomal protein S21.

It localises to the cytoplasm. Its function is as follows. Required for the assembly and/or stability of the 40S ribosomal subunit. Required for the processing of the 20S rRNA-precursor to mature 18S rRNA in a late step of the maturation of 40S ribosomal subunits. The sequence is that of Small ribosomal subunit protein uS2 from Chlamydomonas reinhardtii (Chlamydomonas smithii).